The chain runs to 306 residues: MQRKSGCTLTIRLLERTEIRWLVKELECRPRKSLGQNFVHDANTVRRVVSTSRVNRSDFVLEVGPGFGSLTLALLDCGAAVSAIEIDPVLAGRLPQTVAEHSNNEIHRLTVCNRDVLSFRRGDLATEPTALVANLPYNVAVPALLHLLAEFPSIRTVTVMVQAEVAERLAAEPGGKDYGVPSVKLSFFGRVRRCGMVSPTVFWPIPRVYSGLVRVDRYATSPWPTDDAFRRQVFELVDIAFTQRRKTSRNAFVKWAGSSNESANRLLAASIDPARRGETLSIDDFVRLLRRSDGRDDAAVRSASAS.

The S-adenosyl-L-methionine site is built by asparagine 37, valine 39, glycine 64, glutamate 85, aspartate 115, and asparagine 134.

It belongs to the class I-like SAM-binding methyltransferase superfamily. rRNA adenine N(6)-methyltransferase family. RsmA subfamily.

It localises to the cytoplasm. The catalysed reaction is adenosine(1518)/adenosine(1519) in 16S rRNA + 4 S-adenosyl-L-methionine = N(6)-dimethyladenosine(1518)/N(6)-dimethyladenosine(1519) in 16S rRNA + 4 S-adenosyl-L-homocysteine + 4 H(+). Functionally, specifically dimethylates two adjacent adenosines (A1518 and A1519) in the loop of a conserved hairpin near the 3'-end of 16S rRNA in the 30S particle. May play a critical role in biogenesis of 30S subunits. This Mycobacterium leprae (strain Br4923) protein is Ribosomal RNA small subunit methyltransferase A.